The chain runs to 89 residues: Large ribosomal subunit protein bL31B (89 aa).

It belongs to the bacterial ribosomal protein bL31 family. Type B subfamily. Part of the 50S ribosomal subunit.

The protein is Large ribosomal subunit protein bL31B of Haemophilus ducreyi (strain 35000HP / ATCC 700724).